The primary structure comprises 424 residues: Mitogen-activated protein kinase 9 (424 aa).

Residues 26–321 (YQQLKPIGSG…VDEALRHPYI (296 aa)) enclose the Protein kinase domain. ATP contacts are provided by residues 32-40 (IGSGAQGIV) and Lys55. The Proton acceptor role is filled by Asp151. Position 183 is a phosphothreonine; by MAP2K7 (Thr183). The TXY motif lies at 183 to 185 (TPY). The residue at position 185 (Tyr185) is a Phosphotyrosine; by MAP2K4. A disordered region spans residues 368–424 (KNGVVKDQPSDAAVSSNATPSQSSSINDISSMSTEQTLASDTDSSLDASTGPLEGCR). Over residues 388-417 (SQSSSINDISSMSTEQTLASDTDSSLDAST) the composition is skewed to low complexity.

Belongs to the protein kinase superfamily. CMGC Ser/Thr protein kinase family. MAP kinase subfamily. As to quaternary structure, interacts with MECOM. Interacts with DCLK2. Binds to at least four scaffolding proteins, MAPK8IP1/JIP-1, MAPK8IP2/JIP-2, MAPK8IP3/JIP-3/JSAP1 and SPAG9/MAPK8IP4/JIP-4. These proteins also bind other components of the JNK signaling pathway. Interacts with NFATC4. Interacts with ATF7; the interaction does not phosphorylate ATF7 but acts as a docking site for ATF7-associated partners such as JUN. Interacts with BCL10. Interacts with CTNNB1 and GSK3B. Interacts with MAPKBP1. Interacts with POU5F1; phosphorylates POU5F1 at 'Ser-355'. Found in a complex with SH3RF1, RAC2, MAP3K7/TAK1, MAP2K7/MKK7, MAPK8IP1/JIP1 and MAPK8/JNK1. Mg(2+) is required as a cofactor. Post-translationally, dually phosphorylated on Thr-183 and Tyr-185 by MAP2K7 and MAP2K4, which activates the enzyme. Autophosphorylated in vitro.

The protein localises to the cytoplasm. It localises to the nucleus. It catalyses the reaction L-seryl-[protein] + ATP = O-phospho-L-seryl-[protein] + ADP + H(+). It carries out the reaction L-threonyl-[protein] + ATP = O-phospho-L-threonyl-[protein] + ADP + H(+). Activated by threonine and tyrosine phosphorylation by either of two dual specificity kinases, MAP2K4 and MAP2K7. MAP2K4 shows a strong preference for Tyr-185 while MAP2K7 phosphorylates Tyr-183 preferentially. Inhibited by dual specificity phosphatases, such as DUSP1. Functionally, serine/threonine-protein kinase involved in various processes such as cell proliferation, differentiation, migration, transformation and programmed cell death. Extracellular stimuli such as pro-inflammatory cytokines or physical stress stimulate the stress-activated protein kinase/c-Jun N-terminal kinase (SAP/JNK) signaling pathway. In this cascade, two dual specificity kinases MAP2K4/MKK4 and MAP2K7/MKK7 phosphorylate and activate MAPK9/JNK2. In turn, MAPK9/JNK2 phosphorylates a number of transcription factors, primarily components of AP-1 such as JUN and ATF2 and thus regulates AP-1 transcriptional activity. In response to oxidative or ribotoxic stresses, inhibits rRNA synthesis by phosphorylating and inactivating the RNA polymerase 1-specific transcription initiation factor RRN3. Promotes stressed cell apoptosis by phosphorylating key regulatory factors including TP53 and YAP1. In T-cells, MAPK8 and MAPK9 are required for polarized differentiation of T-helper cells into Th1 cells. Upon T-cell receptor (TCR) stimulation, is activated by CARMA1, BCL10, MAP2K7 and MAP3K7/TAK1 to regulate JUN protein levels. Plays an important role in the osmotic stress-induced epithelial tight-junctions disruption. When activated, promotes beta-catenin/CTNNB1 degradation and inhibits the canonical Wnt signaling pathway. Also participates in neurite growth in spiral ganglion neurons. Phosphorylates the CLOCK-BMAL1 heterodimer and plays a role in the regulation of the circadian clock. Phosphorylates POU5F1, which results in the inhibition of POU5F1's transcriptional activity and enhances its proteasomal degradation. Phosphorylates ALKBH5 in response to reactive oxygen species (ROS), promoting ALKBH5 sumoylation and inactivation. MAPK9 isoforms display different binding patterns: alpha-1 and alpha-2 preferentially bind to JUN, whereas beta-1 and beta-2 bind to ATF2. However, there is no correlation between binding and phosphorylation, which is achieved at about the same efficiency by all isoforms. JUNB is not a substrate for JNK2 alpha-2, and JUND binds only weakly to it. This chain is Mitogen-activated protein kinase 9 (MAPK9), found in Homo sapiens (Human).